We begin with the raw amino-acid sequence, 165 residues long: Late embryogenesis abundant protein D-113 (165 aa).

Over residues 1–13 the composition is skewed to low complexity; that stretch reads MQSMKDAAASAKA. 2 disordered regions span residues 1–76 and 92–165; these read MQSM…IGGT and GGTG…YRSY. Residues 14 to 60 show a composition bias toward basic and acidic residues; sequence GMEKAKASMQEKVDQMKTRDPNEKEMARERKEERQEDAELRKQEARH. A compositionally biased stretch (gly residues) spans 67 to 76; sequence HVGGGGIGGT. Over residues 132 to 155 the composition is skewed to polar residues; that stretch reads TTGNQDFPNAASNNAGTRRNTRGG.

Belongs to the LEA type 1 family.

In terms of biological role, LEA proteins are late embryonic proteins abundant in higher plant seed embryos. There are two subsets of LEA proteins (5a and 5b), the first ones are expressed when the cotyledon weight reach 80 mg and the second set are expressed above 100 mg. The function of those proteins is not known. The protein is Late embryogenesis abundant protein D-113 of Gossypium hirsutum (Upland cotton).